Consider the following 125-residue polypeptide: Immunoglobulin heavy variable 4-39 (125 aa).

Residues 1 to 26 (MDLMCKKMKHLWFFLLLVAAPRWVLS) form the signal peptide. Residues 27-51 (QLQLQESGPGLVKPSETLSLTCTVS) form a framework-1 region. An Ig-like domain is found at 27-125 (QLQLQESGPG…ADTAVYYCAR (99 aa)). Cys-48 and Cys-123 form a disulfide bridge. The tract at residues 52 to 61 (GGSISSSSYY) is complementarity-determining-1. Residues 62–78 (WGWIRQPPGKGLEWIGS) are framework-2. Residues 79-85 (IYYSGST) are complementarity-determining-2. A framework-3 region spans residues 86–123 (YYNPSLKSRVTISVDTSKNQFSLKLSSVTAADTAVYYC). The tract at residues 124 to 125 (AR) is complementarity-determining-3.

Immunoglobulins are composed of two identical heavy chains and two identical light chains; disulfide-linked.

Its subcellular location is the secreted. It is found in the cell membrane. Functionally, v region of the variable domain of immunoglobulin heavy chains that participates in the antigen recognition. Immunoglobulins, also known as antibodies, are membrane-bound or secreted glycoproteins produced by B lymphocytes. In the recognition phase of humoral immunity, the membrane-bound immunoglobulins serve as receptors which, upon binding of a specific antigen, trigger the clonal expansion and differentiation of B lymphocytes into immunoglobulins-secreting plasma cells. Secreted immunoglobulins mediate the effector phase of humoral immunity, which results in the elimination of bound antigens. The antigen binding site is formed by the variable domain of one heavy chain, together with that of its associated light chain. Thus, each immunoglobulin has two antigen binding sites with remarkable affinity for a particular antigen. The variable domains are assembled by a process called V-(D)-J rearrangement and can then be subjected to somatic hypermutations which, after exposure to antigen and selection, allow affinity maturation for a particular antigen. This Homo sapiens (Human) protein is Immunoglobulin heavy variable 4-39.